Consider the following 180-residue polypeptide: Signal peptidase complex subunit 3 (180 aa).

Residues 1-11 (MNTVLSRANSL) lie on the Cytoplasmic side of the membrane. A helical; Signal-anchor for type II membrane protein membrane pass occupies residues 12 to 32 (FAFSLSVMAALTFGCFITTAF). Topologically, residues 33–180 (KERSVPVSIA…PDTYETTKSY (148 aa)) are lumenal. Asparagine 141 is a glycosylation site (N-linked (GlcNAc...) asparagine).

The protein belongs to the SPCS3 family. As to quaternary structure, component of the signal peptidase complex paralog A (SPC-A) composed of a catalytic subunit SEC11A and three accessory subunits SPCS1, SPCS2 and SPCS3. Component of the signal peptidase complex paralog C (SPC-C) composed of a catalytic subunit SEC11C and three accessory subunits SPCS1, SPCS2 and SPCS3. The complex induces a local thinning of the ER membrane which is used to measure the length of the signal peptide (SP) h-region of protein substrates. This ensures the selectivity of the complex towards h-regions shorter than 18-20 amino acids. In terms of tissue distribution, expressed in hen oviduct (at protein level).

It is found in the endoplasmic reticulum membrane. Essential component of the signal peptidase complex (SPC) which catalyzes the cleavage of N-terminal signal sequences from nascent proteins as they are translocated into the lumen of the endoplasmic reticulum. Essential for the SPC catalytic activity, possibly by stabilizing and positioning the active center of the complex close to the lumenal surface. The protein is Signal peptidase complex subunit 3 of Gallus gallus (Chicken).